The chain runs to 642 residues: Threonine--tRNA ligase (642 aa).

One can recognise a TGS domain in the interval 1–61 (MPVITLPDGS…EHDAQIAIIT (61 aa)). A catalytic region spans residues 243 to 534 (DHRKIGKQLD…LTEEYAGFYP (292 aa)). Cys334, His385, and His511 together coordinate Zn(2+).

Belongs to the class-II aminoacyl-tRNA synthetase family. In terms of assembly, homodimer. It depends on Zn(2+) as a cofactor.

The protein localises to the cytoplasm. It catalyses the reaction tRNA(Thr) + L-threonine + ATP = L-threonyl-tRNA(Thr) + AMP + diphosphate + H(+). Catalyzes the attachment of threonine to tRNA(Thr) in a two-step reaction: L-threonine is first activated by ATP to form Thr-AMP and then transferred to the acceptor end of tRNA(Thr). Also edits incorrectly charged L-seryl-tRNA(Thr). This is Threonine--tRNA ligase from Sodalis glossinidius (strain morsitans).